The primary structure comprises 207 residues: Carbonic anhydrase 2 (207 aa).

Zn(2+) is bound by residues Cys-51, Asp-53, His-104, and Cys-107.

The protein belongs to the beta-class carbonic anhydrase family. Zn(2+) is required as a cofactor.

The catalysed reaction is hydrogencarbonate + H(+) = CO2 + H2O. In terms of biological role, catalyzes the reversible hydration of carbon dioxide to form bicarbonate. This is Carbonic anhydrase 2 (mtcA2) from Mycobacterium tuberculosis (strain CDC 1551 / Oshkosh).